Reading from the N-terminus, the 284-residue chain is uncharacterized protein (284 aa).

Composition is skewed to low complexity over residues 110–123 (NGPR…PNNG) and 130–149 (NGPM…NGPN). A disordered region spans residues 110–176 (NGPRGRQMNG…PNEFDSDDDD (67 aa)).

Its subcellular location is the virion. This is an uncharacterized protein from Acanthamoeba polyphaga mimivirus (APMV).